The sequence spans 350 residues: Quinolinate phosphoribosyltransferase [decarboxylating] 1b (350 aa).

Substrate contacts are provided by residues R141, 172–174 (TRK), R196, K206, E239, D266, 298–300 (SGN), and 319–321 (SGA).

It belongs to the NadC/ModD family.

The catalysed reaction is nicotinate beta-D-ribonucleotide + CO2 + diphosphate = quinolinate + 5-phospho-alpha-D-ribose 1-diphosphate + 2 H(+). It participates in alkaloid biosynthesis; nicotine biosynthesis. It functions in the pathway cofactor biosynthesis; NAD(+) biosynthesis; nicotinate D-ribonucleotide from quinolinate: step 1/1. Functionally, involved in the biosynthesis of pyridine alkaloid natural products, leading mainly to the production of anabasine, anatabine, nicotine and nornicotine, effective deterrents against herbivores with antiparasitic and pesticide properties (neurotoxins); nornicotine serves as the precursor in the synthesis of the carcinogen compound N'-nitrosonornicotine (NNN). Involved in the catabolism of quinolinic acid (QA). This Nicotiana tabacum (Common tobacco) protein is Quinolinate phosphoribosyltransferase [decarboxylating] 1b.